Reading from the N-terminus, the 325-residue chain is S-adenosylmethionine carrier 1, chloroplastic/mitochondrial (325 aa).

The transit peptide at 1–38 (MAPLTLSVDVKSSSATSHDVSKRVMQSSQLKINKGFFA) directs the protein to the chloroplast and mitochondrion. Solcar repeat units lie at residues 52 to 124 (RTLF…TKQK), 133 to 215 (LSAV…LCLG), and 228 to 310 (ENAL…TKRT). Helical transmembrane passes span 55-75 (FEGFIAGGTAGVVVETALYPI), 97-117 (YSGLAGNIAGVLPASALFVGV), 132-152 (HLSAVAHLTAGAIGGLAASLI), 230-250 (ALIGAFAGALTGAVTTPLDVI), and 285-305 (GIGPRVLWIGIGGSIFFGVLE).

This sequence belongs to the mitochondrial carrier (TC 2.A.29) family. Expressed in seedlings, cotyledons, leaves and flowers. Lower levels of expression in stems and roots. Not detected in senescent leaves, petals and pollen grains.

The protein localises to the mitochondrion membrane. It localises to the plastid. It is found in the chloroplast membrane. Inhibited strongly by tannic acid, bromocresol purple, mercuric chloride, mersalyl, p-hydroxymercuribenzoate, S-adenosylhomocysteine, S-adenosylcysteine and adenosylornithine, and to a lesser extent by N-ethylmaleimide, bathophenanthroline and pyridoxal-5'-P. In terms of biological role, transporter involved in exchange reactions through membranes. Has a low uniporter activity. Specifically mediates the transport of S-adenosylmethionine (SAM) and its closest analogs. Probably involved in the uptake of SAM in exchange for S-adenosylhomocysteine (SAHC), which is produced from SAM in the mitochondrial matrix and plastidial stroma by methyltransferase activities. This is S-adenosylmethionine carrier 1, chloroplastic/mitochondrial (SAMC1) from Arabidopsis thaliana (Mouse-ear cress).